Consider the following 867-residue polypeptide: DNA replication licensing factor mcm6 (867 aa).

The disordered stretch occupies residues 51–76; that stretch reads IDKNNNNNNNEDNEDNNENENEYDEN. Acidic residues predominate over residues 61–75; it reads EDNEDNNENENEYDE. In terms of domain architecture, MCM spans 420–626; sequence IYQNLVNSIC…ESDHRIAEHI (207 aa). Residues S473, T474, K476, S477, and N578 each coordinate ATP. Residues 602 to 605 carry the Arginine finger motif; that stretch reads SRFD. ADP is bound by residues R693 and E696.

This sequence belongs to the MCM family. In terms of assembly, component of the MCM2-7 complex. The complex forms a toroidal hexameric ring with the proposed subunit order MCM2-MCM6-MCM4-MCM7-MCM3-MCM5 (By simililarity).

The protein localises to the nucleus. It catalyses the reaction ATP + H2O = ADP + phosphate + H(+). Acts as a component of the MCM2-7 complex (MCM complex) which is the replicative helicase essential for 'once per cell cycle' DNA replication initiation and elongation in eukaryotic cells. Core component of CDC45-MCM-GINS (CMG) helicase, the molecular machine that unwinds template DNA during replication, and around which the replisome is built. The active ATPase sites in the MCM2-7 ring are formed through the interaction surfaces of two neighboring subunits such that a critical structure of a conserved arginine finger motif is provided in trans relative to the ATP-binding site of the Walker A box of the adjacent subunit. The six ATPase active sites, however, are likely to contribute differentially to the complex helicase activity. This Dictyostelium discoideum (Social amoeba) protein is DNA replication licensing factor mcm6 (mcm6).